A 76-amino-acid polypeptide reads, in one-letter code: uncharacterized protein (76 aa).

This is an uncharacterized protein from Acidianus bottle-shaped virus (isolate Italy/Pozzuoli) (ABV).